The primary structure comprises 272 residues: Phytolongin Phyl2.2 (272 aa).

A Longin domain is found at 12 to 116; it reads CIAKGTVVLA…LINPVSHCLQ (105 aa). Residues 243-263 traverse the membrane as a helical; Anchor for type IV membrane protein segment; sequence WVVLMFDFCICAVLFGIWLWI.

The protein belongs to the synaptobrevin family.

It is found in the membrane. Functionally, non-SNARE longin protein involved in membrane-trafficking machinery. The sequence is that of Phytolongin Phyl2.2 from Arabidopsis thaliana (Mouse-ear cress).